The chain runs to 603 residues: Elongation factor 4 (603 aa).

A tr-type G domain is found at 7-189 (SRLRNFCIIA…AVVDRIPSPK (183 aa)). GTP is bound by residues 19–24 (DHGKST) and 136–139 (NKVD).

It belongs to the TRAFAC class translation factor GTPase superfamily. Classic translation factor GTPase family. LepA subfamily.

It localises to the cell inner membrane. It carries out the reaction GTP + H2O = GDP + phosphate + H(+). Required for accurate and efficient protein synthesis under certain stress conditions. May act as a fidelity factor of the translation reaction, by catalyzing a one-codon backward translocation of tRNAs on improperly translocated ribosomes. Back-translocation proceeds from a post-translocation (POST) complex to a pre-translocation (PRE) complex, thus giving elongation factor G a second chance to translocate the tRNAs correctly. Binds to ribosomes in a GTP-dependent manner. This chain is Elongation factor 4, found in Prochlorococcus marinus (strain NATL1A).